Reading from the N-terminus, the 351-residue chain is Terpene cyclase sdgD (351 aa).

The next 9 membrane-spanning stretches (helical) occupy residues 7 to 27, 62 to 82, 89 to 109, 126 to 146, 160 to 180, 193 to 213, 229 to 249, 281 to 301, and 316 to 336; these read INFI…TILI, TGVP…WPVI, LSLL…LLLL, WVGL…YCAI, IPHV…LVAL, VVVA…FMAS, IYIF…LASL, FLQW…VAVY, and LEVC…LLIW.

The protein belongs to the membrane-bound ascI terpene cyclase family.

The protein localises to the membrane. It functions in the pathway secondary metabolite biosynthesis. Its function is as follows. Epoxide hydrolase; part of the gene cluster that mediates the biosynthesis of the polyenes aspernidgulenes. The carbon backbone of aspernidgulenes is synthesized by the HR-PKS sdgA, which accepts acetyl-CoA as the starter unit and performs malonyl-CoA extensions as well as regioselective methylation and reduction. The resulting nonaketide offloads the HR-PKS by intramolecular lactonization to yield the 5,6-dihydro-alpha-pyrone-containing hexaenoic acids preaspernidgulene A1 and A2. The FAD-dependent monooxygenase sdgC then installs the first epoxide on the penultimate double bond. Subsequently, the FAD-dependent monooxygenase sdgF presumably generates a ketone intermediate through Meinwald rearrangement involving a hydride shift. Next, sdgC introduces another epoxide on the last olefin of the ketone intermediate after E/Z isomerization. The epoxide hydrolase sdgD then catalyzes stereospecific cyclization of the 5,6-dihydro-alpha-pyrone and opening of the epoxide ring to form an oxygenated trimethylcyclopentanone and an oxabicyclo[2.2.1]heptane unit. Finally, the bicyclic unit undergoes hydrolytic cleavage, either spontaneously or catalyzed by sdgD, to assemble the dimethyl-gamma-lactone moiety in aspernidgulene A1. The protein is Terpene cyclase sdgD of Emericella nidulans (strain FGSC A4 / ATCC 38163 / CBS 112.46 / NRRL 194 / M139) (Aspergillus nidulans).